The primary structure comprises 1267 residues: MPAYFQRPENALKRANEFLEVGKKQPALDVLYDVIKSKKHRTWQKIHEPIMLKYLELCVDLRKSHLAKEGLYQYKNICQQVNIKSLEDVVRAYLKLAEEKTETAKEESQQMVLDIEDLDNIQTPESVLLSAVSGEDTQDRTDRLLLTPWVKFLWESYRQCLDLLRNNSKVERLYHDIAQQAFKFCLQYTRKAEFRKLCDNLRMHLGQIQRHHNQSTAINLNNPESQSMHLETRLVQLDSAISMELWQEAFKAVEDIHGLFALSKKPPKPQLMANYYNKVSTVFWKSGNALFHSCTLHRLYHLSREMRKNLTQEEMQRMSTRVLLATLSIPITPERTDIARLLDMDGIIVEKHRRLATLLGLQSPPTRQSLINDMVRFNLLQYVVPEVKELYNWLEVDFHPLKLCGRVTKVLNWVRDQAEKESDLQQYVPHLQNNTILRLLQQVAQIYQSIEFSRLASLVPFVDAFQLERSIVDAARHCDLQVRIDHSSRTLSFGSDLNYSTKEDSPVGPFLQNMPSEQIRNQLTAMSSSLAKAIQVIKPASILQDHEEQRQQAITAYLKNARKEHQRILARRQTIEERKERLESLNIQREKEELEQREAELQKVRKAEEERLRQEAKEREKERIMQEHEQIKKKTVRERLEQIKKTELGAKAFKDIDIEDLEELDPDFIMAKQVEQLEKEKKELQERLKNQEKKIDYFERAKRLEEIPLIKKAYEEQRIKDMELWELQEEERITNMKMEREKALEHKQRMSRMMEDKENFLSKIKAARSFIYEEKLKQFQERLVEERKKRLEERKKQRKEDRRKAFYHQKEEEAQRIREEQLKKEREERERLEQEQREEEEREYQERLRKLEEQERKQRARQQEIEERERRKEEERRAPEEKPNKEWAEREESGWRKRGEGESEWRRPVPDRDWRQEGREGREEPDREDRDLPFRRGGESARRGASDEKGLRRGCDDDRGPRRGGDDERPPRRGFDDDRGTRRGFDDDRGQRRGDDDRGPRRGMDDDRGPRRPIDDDRGPRRSDDDRGPRRGFDDDRGPRRGMDEPRGPRRGADDDWGPRRGGDDERGGRRGMDDSGPRRGEDSRPWKPLGRPGAGGWREREKAREESWGPPRDSGHDDDGGERDGDDQREGERFRERRSAREEGSAWRRGGGGGGGGEEQSSWRDSRREDFDREDRRERRDMRERRDDRERDIRGPQRDQDEGGSWRRGGEERREERKEERDAPPRPRERDRDSGEKSTWRSDKDKENPRRTKNETDDDGWTTVRR.

The stretch at 82-118 (NIKSLEDVVRAYLKLAEEKTETAKEESQQMVLDIEDL) forms a coiled coil. The 184-residue stretch at 315-498 (MQRMSTRVLL…RTLSFGSDLN (184 aa)) folds into the PCI domain. Composition is skewed to basic and acidic residues over residues 792–835 (EERK…LEQE), 844–1086 (YQER…DSRP), and 1098–1147 (WRER…EGSA). Residues 792-1267 (EERKKQRKED…DDDGWTTVRR (476 aa)) are disordered. Repeat copies occupy residues 956 to 965 (DDDRGPRRGG), 966 to 975 (DDERPPRRGF), and 976 to 985 (DDDRGTRRGF). The tract at residues 956 to 1073 (DDDRGPRRGG…DDERGGRRGM (118 aa)) is 12 X 10 AA approximate tandem repeats of D-[DE]-[DE]-R-[GP]-[GPQT]-R-R-[GPS]-[ADFGIM]. The 4; truncated repeat unit spans residues 986–994 (DDDRGQRRG). A run of 2 repeats spans residues 995–1004 (DDDRGPRRGM) and 1005–1014 (DDDRGPRRPI). The 7; truncated repeat unit spans residues 1015–1023 (DDDRGPRRS). 2 repeat units span residues 1024–1033 (DDDRGPRRGF) and 1034–1043 (DDDRGPRRGM). The stretch at 1044 to 1053 (DEPRGPRRGA) is one 10; approximate repeat. Copy 11 of the repeat occupies 1054–1063 (DDDWGPRRGG). One copy of the 12; approximate repeat lies at 1064-1073 (DDERGGRRGM). Residues 1150–1159 (RGGGGGGGGE) are compositionally biased toward gly residues. Positions 1162-1256 (SSWRDSRRED…KENPRRTKNE (95 aa)) are enriched in basic and acidic residues.

This sequence belongs to the eIF-3 subunit A family. Component of the eukaryotic translation initiation factor 3 (eIF-3) complex, which is composed of 13 subunits: eif3a, eif3b, eif3c, eif3d, eif3e, eif3f, eif3g, eif3h, eif3i, eif3j, eif3k, eif3l and eif3m.

It localises to the cytoplasm. Functionally, RNA-binding component of the eukaryotic translation initiation factor 3 (eIF-3) complex, which is involved in protein synthesis of a specialized repertoire of mRNAs and, together with other initiation factors, stimulates binding of mRNA and methionyl-tRNAi to the 40S ribosome. The eIF-3 complex specifically targets and initiates translation of a subset of mRNAs involved in cell proliferation. This is Eukaryotic translation initiation factor 3 subunit A (eif3a) from Danio rerio (Zebrafish).